A 527-amino-acid chain; its full sequence is Catalase (527 aa).

The segment covering 1–22 has biased composition (basic and acidic residues); sequence MADSRDPASDQMKHWKEERAAQ. Residues 1-32 form a disordered region; the sequence is MADSRDPASDQMKHWKEERAAQKPDVLTTAGG. Ala-2 carries the N-acetylalanine modification. Ser-9 is subject to Phosphoserine. Position 13 is an N6-succinyllysine (Lys-13). Residues His-75 and Asn-148 contribute to the active site. Positions 194, 201, 203, and 213 each coordinate NADP(+). Position 221 is an N6-succinyllysine (Lys-221). Lys-233 is subject to N6-acetyllysine. NADP(+) is bound by residues Lys-237, Trp-303, His-305, and Lys-306. Lys-306 is subject to N6-acetyllysine; alternate. At Lys-306 the chain carries N6-succinyllysine; alternate. Tyr-358 contributes to the heme binding site. Position 434 is a phosphoserine (Ser-434). An N6-acetyllysine; alternate modification is found at Lys-480. Lys-480 carries the N6-succinyllysine; alternate modification. At Lys-499 the chain carries N6-acetyllysine. Thr-511 is subject to Phosphothreonine. A Phosphoserine modification is found at Ser-517. N6-succinyllysine is present on Lys-522. Positions 524-527 match the Microbody targeting signal; atypical motif; that stretch reads KANL.

This sequence belongs to the catalase family. Homotetramer. Interacts (via microbody targeting signal) with PEX5, monomeric form interacts with PEX5, leading to its translocation into peroxisomes. Heme serves as cofactor. It depends on NADP(+) as a cofactor.

The protein resides in the peroxisome matrix. The enzyme catalyses 2 H2O2 = O2 + 2 H2O. Catalyzes the degradation of hydrogen peroxide (H(2)O(2)) generated by peroxisomal oxidases to water and oxygen, thereby protecting cells from the toxic effects of hydrogen peroxide. Promotes growth of cells including T-cells, B-cells, myeloid leukemia cells, melanoma cells, mastocytoma cells and normal and transformed fibroblast cells. The protein is Catalase (CAT) of Cavia porcellus (Guinea pig).